A 276-amino-acid polypeptide reads, in one-letter code: Rhomboid protease GlpG (276 aa).

The next 6 membrane-spanning stretches (helical) occupy residues 94-114, 142-162, 169-189, 192-212, 229-249, and 250-270; these read GPVTWVMMIACVVVFIAMQIL, ALMHFSLMHILFNLLWWWYLG, LGSGKLIVITLISALLSGYVQ, FSGPWFGGLSGVVYALMGYVW, LIIFALIWIVAGWFDLFGMSM, and ANGAHIAGLAVGLAMAFVDSL. The active-site Nucleophile is the S201. H254 is a catalytic residue.

The protein belongs to the peptidase S54 family.

The protein localises to the cell inner membrane. The catalysed reaction is Cleaves type-1 transmembrane domains using a catalytic dyad composed of serine and histidine that are contributed by different transmembrane domains.. Functionally, rhomboid-type serine protease that catalyzes intramembrane proteolysis. The polypeptide is Rhomboid protease GlpG (Escherichia coli O81 (strain ED1a)).